The chain runs to 51 residues: Insulin (51 aa).

Disulfide bonds link Cys-7–Cys-37, Cys-19–Cys-50, and Cys-36–Cys-41.

Belongs to the insulin family. In terms of assembly, heterodimer of a B chain and an A chain linked by two disulfide bonds.

The protein resides in the secreted. Insulin decreases blood glucose concentration. It increases cell permeability to monosaccharides, amino acids and fatty acids. It accelerates glycolysis, the pentose phosphate cycle, and glycogen synthesis in liver. The sequence is that of Insulin (INS) from Capra hircus (Goat).